The chain runs to 1043 residues: Constitutive coactivator of PPAR-gamma-like protein 1 homolog (1043 aa).

Disordered stretches follow at residues 353–497 (SMVP…HMQI) and 929–1043 (YGRG…NKEE). Polar residues-rich tracts occupy residues 362 to 375 (QMLNIPQGSVQSRP) and 405 to 419 (SPINPAQSGSPNHVD). Basic and acidic residues-rich tracts occupy residues 451-471 (TWDKGKKSEKANKKDSTEQAK) and 951-964 (EVAKELKTQSEDSK). Residues 801–1043 (VELATKVEKM…LEGAVANKEE (243 aa)) form an RNA binding region. Residues 995 to 1010 (EARASSNSESALSSDS) show a composition bias toward low complexity.

This sequence belongs to the constitutive coactivator of PPAR-gamma family.

The protein resides in the cytoplasm. It is found in the cell membrane. Functionally, may bee involved in the oxidative stress-induced survival signaling. Binds RNA. May participate in mRNA transport in the cytoplasm. This Xenopus tropicalis (Western clawed frog) protein is Constitutive coactivator of PPAR-gamma-like protein 1 homolog (fam120a).